The chain runs to 689 residues: Glycine--tRNA ligase beta subunit (689 aa).

Belongs to the class-II aminoacyl-tRNA synthetase family. As to quaternary structure, tetramer of two alpha and two beta subunits.

The protein localises to the cytoplasm. It catalyses the reaction tRNA(Gly) + glycine + ATP = glycyl-tRNA(Gly) + AMP + diphosphate. In Edwardsiella ictaluri (strain 93-146), this protein is Glycine--tRNA ligase beta subunit.